We begin with the raw amino-acid sequence, 273 residues long: Putative pyruvate, phosphate dikinase regulatory protein (273 aa).

149–156 (GPSRTSKT) provides a ligand contact to ADP.

This sequence belongs to the pyruvate, phosphate/water dikinase regulatory protein family. PDRP subfamily.

It carries out the reaction N(tele)-phospho-L-histidyl/L-threonyl-[pyruvate, phosphate dikinase] + ADP = N(tele)-phospho-L-histidyl/O-phospho-L-threonyl-[pyruvate, phosphate dikinase] + AMP + H(+). It catalyses the reaction N(tele)-phospho-L-histidyl/O-phospho-L-threonyl-[pyruvate, phosphate dikinase] + phosphate + H(+) = N(tele)-phospho-L-histidyl/L-threonyl-[pyruvate, phosphate dikinase] + diphosphate. Its function is as follows. Bifunctional serine/threonine kinase and phosphorylase involved in the regulation of the pyruvate, phosphate dikinase (PPDK) by catalyzing its phosphorylation/dephosphorylation. The polypeptide is Putative pyruvate, phosphate dikinase regulatory protein (Rickettsia bellii (strain OSU 85-389)).